The chain runs to 169 residues: 4-hydroxylaminobenzoate lyase (169 aa).

This sequence belongs to the PnbB family.

The enzyme catalyses 4-hydroxylaminobenzoate + H2O + H(+) = 3,4-dihydroxybenzoate + NH4(+). In terms of biological role, lyase involved in the degradation of nitroaromatic compounds. Catalyzes the conversion of 4-hydroxylaminobenzoate to 3,4-dihydroxybenzoate (protocatechuate). This Nocardioides sp. (strain LMS-CY) protein is 4-hydroxylaminobenzoate lyase.